Consider the following 380-residue polypeptide: Alanine racemase (380 aa).

Lys-34 (proton acceptor; specific for D-alanine) is an active-site residue. An N6-(pyridoxal phosphate)lysine modification is found at Lys-34. Substrate is bound at residue Arg-135. Tyr-267 acts as the Proton acceptor; specific for L-alanine in catalysis. Met-315 contacts substrate.

The protein belongs to the alanine racemase family. It depends on pyridoxal 5'-phosphate as a cofactor.

The catalysed reaction is L-alanine = D-alanine. It participates in amino-acid biosynthesis; D-alanine biosynthesis; D-alanine from L-alanine: step 1/1. Functionally, catalyzes the interconversion of L-alanine and D-alanine. May also act on other amino acids. The protein is Alanine racemase (alr) of Lawsonia intracellularis (strain PHE/MN1-00).